Consider the following 416-residue polypeptide: Ferrochelatase, mitochondrial (416 aa).

Residues 1-47 constitute a mitochondrion transit peptide; it reads MAAALRSAGVLLRDRLLYGGSRACQPRRCQSGAATAAAATETAQRAR. Positions 41–62 are disordered; sequence ETAQRARSPKPQAQPGNRKPRT. The residue at position 50 (Lys-50) is an N6-acetyllysine. Positions 108, 116, and 123 each coordinate protoporphyrin IX. The residue at position 131 (Lys-131) is an N6-succinyllysine. Cys-189 contacts [2Fe-2S] cluster. Residue His-223 is part of the active site. Position 283 is an N6-acetyllysine; alternate (Lys-283). Position 283 is an N6-succinyllysine; alternate (Lys-283). Residue Asp-376 is part of the active site. [2Fe-2S] cluster is bound by residues Cys-396, Cys-399, and Cys-404. N6-acetyllysine; alternate is present on Lys-408. Residue Lys-408 is modified to N6-succinyllysine; alternate.

It belongs to the ferrochelatase family. Homodimer. Homotetramer. Interaction with PGRMC1; the interaction results in decreased FECH activity. Interacts with ABCB10 and SLC25A37; this interaction forms an oligomeric complex. Forms a complex with ABCB7 and ABCB10, where a dimeric FECH bridges ABCB7 and ABCB10 homodimers; this complex may be required for cellular iron homeostasis, mitochondrial function and heme biosynthesis. Interacts with ABCB7 and ABCB10. The cofactor is [2Fe-2S] cluster.

The protein localises to the mitochondrion inner membrane. It carries out the reaction heme b + 2 H(+) = protoporphyrin IX + Fe(2+). It functions in the pathway porphyrin-containing compound metabolism; protoheme biosynthesis; protoheme from protoporphyrin-IX: step 1/1. Its function is as follows. Catalyzes the ferrous insertion into protoporphyrin IX and participates in the terminal step in the heme biosynthetic pathway. This is Ferrochelatase, mitochondrial from Bos taurus (Bovine).